A 115-amino-acid polypeptide reads, in one-letter code: uncharacterized protein (115 aa).

This is an uncharacterized protein from Ostreid herpesvirus 1 (isolate France) (OsHV-1).